Consider the following 149-residue polypeptide: Ribosomal RNA large subunit methyltransferase H (149 aa).

S-adenosyl-L-methionine-binding positions include Leu71, Gly98, and 117–122 (LSKLTL).

It belongs to the RNA methyltransferase RlmH family. Homodimer.

The protein localises to the cytoplasm. The enzyme catalyses pseudouridine(1915) in 23S rRNA + S-adenosyl-L-methionine = N(3)-methylpseudouridine(1915) in 23S rRNA + S-adenosyl-L-homocysteine + H(+). Specifically methylates the pseudouridine at position 1915 (m3Psi1915) in 23S rRNA. The polypeptide is Ribosomal RNA large subunit methyltransferase H (Campylobacter jejuni subsp. doylei (strain ATCC BAA-1458 / RM4099 / 269.97)).